The primary structure comprises 505 residues: ATP synthase subunit alpha (505 aa).

Residue 171–178 (GDRQTGKT) participates in ATP binding.

This sequence belongs to the ATPase alpha/beta chains family. As to quaternary structure, F-type ATPases have 2 components, CF(1) - the catalytic core - and CF(0) - the membrane proton channel. CF(1) has five subunits: alpha(3), beta(3), gamma(1), delta(1), epsilon(1). CF(0) has three main subunits: a(1), b(2) and c(9-12). The alpha and beta chains form an alternating ring which encloses part of the gamma chain. CF(1) is attached to CF(0) by a central stalk formed by the gamma and epsilon chains, while a peripheral stalk is formed by the delta and b chains.

It localises to the cell inner membrane. It carries out the reaction ATP + H2O + 4 H(+)(in) = ADP + phosphate + 5 H(+)(out). Functionally, produces ATP from ADP in the presence of a proton gradient across the membrane. The alpha chain is a regulatory subunit. The protein is ATP synthase subunit alpha of Nitratiruptor sp. (strain SB155-2).